The following is a 1174-amino-acid chain: Ankyrin repeat and LEM domain-containing protein 2 homolog (1174 aa).

4 stretches are compositionally biased toward low complexity: residues 37–56 (NPAS…SAAS), 150–164 (SSPT…SSPT), 174–198 (LGSN…SSSN), and 205–219 (QQQM…PQQP). Disordered stretches follow at residues 37–74 (NPAS…YEDP) and 141–230 (PIIS…PFRA). One copy of the ANK repeat lies at 338–367 (RGETPLHFAAKNGHVAMVEVLVSYPECKSL). Disordered stretches follow at residues 519 to 543 (AEAT…HNNN) and 961 to 981 (GSSS…SPGI). Residues 521-532 (ATSSPKPTKNVP) show a composition bias toward polar residues. Residues 533–543 (NGTNECEHNNN) are compositionally biased toward low complexity.

This sequence belongs to the ANKLE2 family.

The protein resides in the endoplasmic reticulum. It is found in the nucleus envelope. Its subcellular location is the cytoplasm. Its function is as follows. Involved in brain development probably by regulating asymmetric division of neuroblasts. Regulates neuroblast asymmetric cell division by controlling asymmetric protein localization of Mira, Baz, Par-6 and aPKC, and spindle alignment. Also, regulates the localization of kinase Ball during mitosis, specifically maintaining Ball in the nucleus during interphase. Required for proper ER and nuclear envelope morphology in neuroblasts. The protein is Ankyrin repeat and LEM domain-containing protein 2 homolog of Drosophila melanogaster (Fruit fly).